A 157-amino-acid polypeptide reads, in one-letter code: 3-hydroxyacyl-[acyl-carrier-protein] dehydratase FabZ (157 aa).

His-58 is an active-site residue.

Belongs to the thioester dehydratase family. FabZ subfamily.

It is found in the cytoplasm. It catalyses the reaction a (3R)-hydroxyacyl-[ACP] = a (2E)-enoyl-[ACP] + H2O. Functionally, involved in unsaturated fatty acids biosynthesis. Catalyzes the dehydration of short chain beta-hydroxyacyl-ACPs and long chain saturated and unsaturated beta-hydroxyacyl-ACPs. The protein is 3-hydroxyacyl-[acyl-carrier-protein] dehydratase FabZ of Brucella abortus biovar 1 (strain 9-941).